The sequence spans 247 residues: MSYDRAITVFSPDGHLFQVEYAQEAVKKGSTAVGVRGKEIVVLGVEKKSVAKLQDERTVRKICALDENVFMAFAGLTADARIVINRARVECQSHRLTVEDPVTVEYITRYIASLKQRYTQSNGRRPFGISALIVGFDFDGTPRLYQTDPSGTYHAWKANAIGRGAKSVREFLEKHYTDEAIETDDLTIKLVIKALLEVVQSGGKNIELAVMRRDQPLKILNPEEIERYVAEIEKEKEENEKKKQKKT.

Belongs to the peptidase T1A family. In terms of assembly, the 26S proteasome consists of a 20S proteasome core and two 19S regulatory subunits. The 20S proteasome core is composed of 28 subunits that are arranged in four stacked rings, resulting in a barrel-shaped structure. The two end rings are each formed by seven alpha subunits, and the two central rings are each formed by seven beta subunits. The catalytic chamber with the active sites is on the inside of the barrel. Phosphorylated in G2 phase.

The protein localises to the cytoplasm. The protein resides in the nucleus. The proteasome is a multicatalytic proteinase complex which is characterized by its ability to cleave peptides with Arg, Phe, Tyr, Leu, and Glu adjacent to the leaving group at neutral or slightly basic pH. The proteasome has an ATP-dependent proteolytic activity. The polypeptide is Proteasome subunit alpha type-7-B (psma7-b) (Xenopus laevis (African clawed frog)).